Consider the following 859-residue polypeptide: Cleavage factor two protein 2 (859 aa).

A disordered region spans residues 560–611; that stretch reads PDDSDNVNQNSRKRPLKDGAKTTSPVNEEDNKNEEEDGYNMSDPISKRSKHR. Positions 586–597 are enriched in acidic residues; it reads NEEDNKNEEEDG.

In terms of assembly, component of the cleavage and polyadenylation factor (CPF) complex, which is composed of at least PTI1, SYC1, SSU72, GLC7, MPE1, REF2, PFS2, PTA1, YSH1/BRR5, SWD2, CFT2/YDH1, YTH1, CFT1/YHH1, FIP1 and PAP1. Interacts with the CTD domain of RPB1/RNA polymerase II; the interaction is enhanced upon phosphorylation of the RPB1 CTD domain. Interacts with PCF11.

Its subcellular location is the nucleus. RNA-binding component of the cleavage and polyadenylation factor (CPF) complex, which plays a key role in polyadenylation-dependent pre-mRNA 3'-end formation and cooperates with cleavage factors including the CFIA complex and NAB4/CFIB. May be involved in poly(A)-site recognition. May be involved in the association of the CPF, CPFIA and RNA polymerase II complexes. The sequence is that of Cleavage factor two protein 2 (CFT2) from Saccharomyces cerevisiae (strain ATCC 204508 / S288c) (Baker's yeast).